A 459-amino-acid polypeptide reads, in one-letter code: Cysteine--tRNA ligase (459 aa).

A Zn(2+)-binding site is contributed by cysteine 27. The 'HIGH' region signature appears at 29-39 (ITVYDDCHIGH). The Zn(2+) site is built by cysteine 208, histidine 233, and glutamate 237. The short motif at 265–269 (KMSKS) is the 'KMSKS' region element. Lysine 268 lines the ATP pocket.

It belongs to the class-I aminoacyl-tRNA synthetase family. Monomer. Zn(2+) is required as a cofactor.

It localises to the cytoplasm. The catalysed reaction is tRNA(Cys) + L-cysteine + ATP = L-cysteinyl-tRNA(Cys) + AMP + diphosphate. This is Cysteine--tRNA ligase from Francisella philomiragia subsp. philomiragia (strain ATCC 25017 / CCUG 19701 / FSC 153 / O#319-036).